The primary structure comprises 210 residues: Large ribosomal subunit protein uL4 (210 aa).

The disordered stretch occupies residues 46-89 (QGTASTLTRSEVRGGGRKPYKQKGTGRARQGSIRTPLRPGGGII). The segment covering 60-71 (GGRKPYKQKGTG) has biased composition (basic residues).

The protein belongs to the universal ribosomal protein uL4 family. As to quaternary structure, part of the 50S ribosomal subunit.

One of the primary rRNA binding proteins, this protein initially binds near the 5'-end of the 23S rRNA. It is important during the early stages of 50S assembly. It makes multiple contacts with different domains of the 23S rRNA in the assembled 50S subunit and ribosome. Its function is as follows. Forms part of the polypeptide exit tunnel. This is Large ribosomal subunit protein uL4 from Prochlorococcus marinus (strain MIT 9312).